Here is a 129-residue protein sequence, read N- to C-terminus: Small ribosomal subunit protein uS8 (129 aa).

It belongs to the universal ribosomal protein uS8 family. Part of the 30S ribosomal subunit. Contacts proteins S5 and S12.

In terms of biological role, one of the primary rRNA binding proteins, it binds directly to 16S rRNA central domain where it helps coordinate assembly of the platform of the 30S subunit. This Mycoplasma capricolum subsp. capricolum (strain California kid / ATCC 27343 / NCTC 10154) protein is Small ribosomal subunit protein uS8.